A 533-amino-acid polypeptide reads, in one-letter code: Zona pellucida sperm-binding protein 3 receptor (533 aa).

An N-terminal signal peptide occupies residues methionine 1–glycine 28. 7 Sushi domains span residues aspartate 29 to lysine 88, lysine 89 to isoleucine 150, valine 151 to lysine 215, valine 216 to proline 275, asparagine 276 to arginine 342, valine 343 to serine 408, and alanine 409 to tryptophan 467. Disulfide bonds link cysteine 30–cysteine 74, cysteine 60–cysteine 86, cysteine 91–cysteine 132, cysteine 118–cysteine 148, cysteine 153–cysteine 196, cysteine 182–cysteine 213, cysteine 218–cysteine 260, cysteine 246–cysteine 273, cysteine 278–cysteine 328, cysteine 312–cysteine 340, cysteine 345–cysteine 393, cysteine 378–cysteine 406, cysteine 411–cysteine 452, and cysteine 438–cysteine 465. Residues asparagine 68 and asparagine 77 are each glycosylated (N-linked (GlcNAc...) asparagine). Asparagine 185, asparagine 191, and asparagine 200 each carry an N-linked (GlcNAc...) asparagine glycan. Residues asparagine 433 and asparagine 455 are each glycosylated (N-linked (GlcNAc...) asparagine).

Homooligomer; disulfide-linked. May contain 6-8 monomers per oligomer. In terms of processing, the N-terminus may be blocked. Testis. Not expressed in heart, brain, liver or kidney.

The protein localises to the cytoplasmic vesicle. It localises to the secretory vesicle. It is found in the acrosome lumen. Probably involved in the formation of the dense core and M1 domain of the acrosome. May also regulate the release of certain secretory proteins following the acrosomal reaction. This is Zona pellucida sperm-binding protein 3 receptor (ZP3R) from Cavia porcellus (Guinea pig).